Here is a 37-residue protein sequence, read N- to C-terminus: Cytochrome b6-f complex subunit 5 (37 aa).

The chain crosses the membrane as a helical span at residues 5–25 (LLSGIVLGMITVSAFGLFVAA).

The protein belongs to the PetG family. As to quaternary structure, the 4 large subunits of the cytochrome b6-f complex are cytochrome b6, subunit IV (17 kDa polypeptide, PetD), cytochrome f and the Rieske protein, while the 4 small subunits are PetG, PetL, PetM and PetN. The complex functions as a dimer.

It is found in the plastid. Its subcellular location is the chloroplast thylakoid membrane. In terms of biological role, component of the cytochrome b6-f complex, which mediates electron transfer between photosystem II (PSII) and photosystem I (PSI), cyclic electron flow around PSI, and state transitions. PetG is required for either the stability or assembly of the cytochrome b6-f complex. The protein is Cytochrome b6-f complex subunit 5 of Thalassiosira pseudonana (Marine diatom).